Consider the following 101-residue polypeptide: Pterin-4-alpha-carbinolamine dehydratase (101 aa).

Belongs to the pterin-4-alpha-carbinolamine dehydratase family.

It carries out the reaction (4aS,6R)-4a-hydroxy-L-erythro-5,6,7,8-tetrahydrobiopterin = (6R)-L-erythro-6,7-dihydrobiopterin + H2O. This Drosophila virilis (Fruit fly) protein is Pterin-4-alpha-carbinolamine dehydratase (Pcd).